The sequence spans 88 residues: Small ribosomal subunit protein bS20 (88 aa).

Residues 1 to 20 (MANTKSARKSLIKSKQQRKC) are disordered.

Belongs to the bacterial ribosomal protein bS20 family.

Binds directly to 16S ribosomal RNA. The polypeptide is Small ribosomal subunit protein bS20 (Blochmanniella pennsylvanica (strain BPEN)).